A 393-amino-acid chain; its full sequence is Chorismate synthase (393 aa).

NADP(+) is bound by residues arginine 40 and arginine 46. FMN is bound by residues 129-131 (RSS), 249-250 (QA), glycine 301, 316-320 (KPIPT), and arginine 342.

This sequence belongs to the chorismate synthase family. In terms of assembly, homotetramer. The cofactor is FMNH2.

The enzyme catalyses 5-O-(1-carboxyvinyl)-3-phosphoshikimate = chorismate + phosphate. The protein operates within metabolic intermediate biosynthesis; chorismate biosynthesis; chorismate from D-erythrose 4-phosphate and phosphoenolpyruvate: step 7/7. Catalyzes the anti-1,4-elimination of the C-3 phosphate and the C-6 proR hydrogen from 5-enolpyruvylshikimate-3-phosphate (EPSP) to yield chorismate, which is the branch point compound that serves as the starting substrate for the three terminal pathways of aromatic amino acid biosynthesis. This reaction introduces a second double bond into the aromatic ring system. The sequence is that of Chorismate synthase from Geotalea uraniireducens (strain Rf4) (Geobacter uraniireducens).